The following is a 427-amino-acid chain: tRNA(Ile)-lysidine synthase (427 aa).

21 to 26 (SGGADS) provides a ligand contact to ATP.

This sequence belongs to the tRNA(Ile)-lysidine synthase family.

The protein localises to the cytoplasm. It catalyses the reaction cytidine(34) in tRNA(Ile2) + L-lysine + ATP = lysidine(34) in tRNA(Ile2) + AMP + diphosphate + H(+). Ligates lysine onto the cytidine present at position 34 of the AUA codon-specific tRNA(Ile) that contains the anticodon CAU, in an ATP-dependent manner. Cytidine is converted to lysidine, thus changing the amino acid specificity of the tRNA from methionine to isoleucine. This is tRNA(Ile)-lysidine synthase from Actinobacillus succinogenes (strain ATCC 55618 / DSM 22257 / CCUG 43843 / 130Z).